We begin with the raw amino-acid sequence, 336 residues long: Dihydroorotate dehydrogenase (quinone) (336 aa).

FMN-binding positions include 62 to 66 and Thr86; that span reads AGLDK. Residue Lys66 coordinates substrate. Position 111–115 (111–115) interacts with substrate; that stretch reads NRMGF. Positions 139 and 172 each coordinate FMN. Asn172 serves as a coordination point for substrate. Residue Ser175 is the Nucleophile of the active site. Residue Asn177 participates in substrate binding. Positions 217 and 245 each coordinate FMN. 246–247 contributes to the substrate binding site; it reads NT. FMN is bound by residues Gly268, Gly297, and 318–319; that span reads YS.

Belongs to the dihydroorotate dehydrogenase family. Type 2 subfamily. In terms of assembly, monomer. FMN serves as cofactor.

The protein localises to the cell membrane. It carries out the reaction (S)-dihydroorotate + a quinone = orotate + a quinol. It participates in pyrimidine metabolism; UMP biosynthesis via de novo pathway; orotate from (S)-dihydroorotate (quinone route): step 1/1. Functionally, catalyzes the conversion of dihydroorotate to orotate with quinone as electron acceptor. This Salmonella gallinarum (strain 287/91 / NCTC 13346) protein is Dihydroorotate dehydrogenase (quinone).